The chain runs to 195 residues: Putative deoxynucleoside kinase (195 aa).

This is Putative deoxynucleoside kinase from Frog virus 3 (isolate Goorha) (FV-3).